Here is a 301-residue protein sequence, read N- to C-terminus: Lycopene elongase/hydratase (301 aa).

Residues 1-20 form a disordered region; it reads MSADMAAQSESGEGGDDGRA. A run of 9 helical transmembrane segments spans residues 39–59, 61–81, 110–130, 133–153, 160–180, 186–206, 229–249, 252–272, and 276–296; these read FWLYLAGPVVVGVAAAASALA, LFGLEPVALFAYFLVPANVFL, PVNTVVVAASGLLGVGLFAVA, VAWPWLAAHFFLAVEYSAPPF, LLDSVSNGLYVLPGVAAYAAV, PMLAVAGAWLWTMGMHTFSAI, TYWYCAATWVLAAVAFAAVDL, GALLAAYPVVVLGIVAAGVDV, and YWWYPVINTVVGMLITLGALW.

The protein belongs to the UbiA prenyltransferase family.

The protein resides in the cell membrane. The enzyme catalyses all-trans-lycopene + dimethylallyl diphosphate + H2O = dihydroisopentenyldehydrorhodopin + diphosphate. The catalysed reaction is isopentenyldehydrorhodopin + dimethylallyl diphosphate + H2O = dihydrobisanhydrobacterioruberin + diphosphate. Its pathway is carotenoid biosynthesis. Its function is as follows. Involved in the biosynthesis of the acyclic C50 carotenoid bacterioruberin (BR). Acts as a bifunctional elongase/hydratase that catalyzes the elongation of lycopene by attaching a C(5) isoprene unit at C-2, as well as the hydroxylation of the previous end of the molecule. The enzyme acts at both ends of the substrate, and catalyzes the conversion of lycopene to the C(45) intermediate dihydroisopentenyldehydrorhodopin (DH-IDR) and the conversion of isopentenyldehydrorhodopin (IDR) to the C(50) carotenoid dihydrobisanhydrobacterioruberin (DH-BABR). Can also catalyze the conversion of lycopene to tetrahydrobisanhydrobacterioruberin (TH-BABR). This is Lycopene elongase/hydratase from Haloferax volcanii (strain ATCC 29605 / DSM 3757 / JCM 8879 / NBRC 14742 / NCIMB 2012 / VKM B-1768 / DS2) (Halobacterium volcanii).